The primary structure comprises 338 residues: Ketol-acid reductoisomerase (NADP(+)) (338 aa).

Residues 1-181 (MKVSYDKDCD…GGGRTGIIET (181 aa)) form the KARI N-terminal Rossmann domain. NADP(+)-binding positions include 24 to 27 (YGSQ), Arg-47, Ser-50, Ser-52, and 82 to 85 (DEFQ). His-107 is an active-site residue. Gly-133 is a binding site for NADP(+). The 146-residue stretch at 182 to 327 (TFKDETETDL…EKLRAMMPWI (146 aa)) folds into the KARI C-terminal knotted domain. Positions 190, 194, 226, and 230 each coordinate Mg(2+). Residue Ser-251 coordinates substrate.

Belongs to the ketol-acid reductoisomerase family. Mg(2+) is required as a cofactor.

It carries out the reaction (2R)-2,3-dihydroxy-3-methylbutanoate + NADP(+) = (2S)-2-acetolactate + NADPH + H(+). The enzyme catalyses (2R,3R)-2,3-dihydroxy-3-methylpentanoate + NADP(+) = (S)-2-ethyl-2-hydroxy-3-oxobutanoate + NADPH + H(+). It participates in amino-acid biosynthesis; L-isoleucine biosynthesis; L-isoleucine from 2-oxobutanoate: step 2/4. The protein operates within amino-acid biosynthesis; L-valine biosynthesis; L-valine from pyruvate: step 2/4. Involved in the biosynthesis of branched-chain amino acids (BCAA). Catalyzes an alkyl-migration followed by a ketol-acid reduction of (S)-2-acetolactate (S2AL) to yield (R)-2,3-dihydroxy-isovalerate. In the isomerase reaction, S2AL is rearranged via a Mg-dependent methyl migration to produce 3-hydroxy-3-methyl-2-ketobutyrate (HMKB). In the reductase reaction, this 2-ketoacid undergoes a metal-dependent reduction by NADPH to yield (R)-2,3-dihydroxy-isovalerate. The polypeptide is Ketol-acid reductoisomerase (NADP(+)) (Stutzerimonas stutzeri (strain A1501) (Pseudomonas stutzeri)).